The sequence spans 68 residues: Protein SlyX homolog (68 aa).

Belongs to the SlyX family.

The chain is Protein SlyX homolog from Pseudomonas fluorescens (strain ATCC BAA-477 / NRRL B-23932 / Pf-5).